The chain runs to 223 residues: RNA pyrophosphohydrolase (223 aa).

The Nudix hydrolase domain maps to 6–149 (GFRPNVGIIL…KRGVYEMALT (144 aa)). The Nudix box motif lies at 38–59 (GGIDRGESPEQAMFRELHEEVG). Residues 175–223 (ERHMPDGGAPAGLDLPPGGSFDPHPDITSASDDPSPPPHNKAPFLPSQR) are disordered. Over residues 180-193 (DGGAPAGLDLPPGG) the composition is skewed to low complexity.

It belongs to the Nudix hydrolase family. RppH subfamily. The cofactor is a divalent metal cation.

Functionally, accelerates the degradation of transcripts by removing pyrophosphate from the 5'-end of triphosphorylated RNA, leading to a more labile monophosphorylated state that can stimulate subsequent ribonuclease cleavage. The protein is RNA pyrophosphohydrolase of Variovorax paradoxus (strain S110).